A 28-amino-acid polypeptide reads, in one-letter code: Cytochrome b6-f complex subunit 6 (28 aa).

The chain crosses the membrane as a helical span at residues 2-22 (VEYLVILSGMFGLALACFFGL).

The protein belongs to the PetL family. As to quaternary structure, the 4 large subunits of the cytochrome b6-f complex are cytochrome b6, subunit IV (17 kDa polypeptide, PetD), cytochrome f and the Rieske protein, while the 4 small subunits are PetG, PetL, PetM and PetN. The complex functions as a dimer.

It localises to the plastid. Its subcellular location is the cyanelle thylakoid membrane. Functionally, component of the cytochrome b6-f complex, which mediates electron transfer between photosystem II (PSII) and photosystem I (PSI), cyclic electron flow around PSI, and state transitions. PetL is important for photoautotrophic growth as well as for electron transfer efficiency and stability of the cytochrome b6-f complex. This is Cytochrome b6-f complex subunit 6 from Cyanophora paradoxa.